Reading from the N-terminus, the 593-residue chain is Inactive metallocarboxypeptidase ECM14 (593 aa).

The signal sequence occupies residues 1–22 (MHFSVRLSLLLTLASSLPLVSA). The propeptide occupies 23–184 (IPQHEDQAYT…QTIYESYPKT (162 aa)). The interval 180-210 (SYPKTNPSSPSQQGPTTRRFSPSASTSKTKP) is disordered. Polar residues predominate over residues 182 to 210 (PKTNPSSPSQQGPTTRRFSPSASTSKTKP). Residues 220–546 (DYQPLSVLLP…RAMVAMGKFL (327 aa)) form the Peptidase M14 domain. Positions 285 and 288 each coordinate Zn(2+). Residues 285–288 (HARE), arginine 343, and 360–361 (DH) contribute to the substrate site. Cysteine 354 and cysteine 377 are oxidised to a cystine. Residue asparagine 370 is glycosylated (N-linked (GlcNAc...) asparagine). Zn(2+) is bound at residue histidine 417. 418-419 (SY) is a binding site for substrate. A disordered region spans residues 557 to 593 (NGPHAAEETQNYDDDFEEDEAEEDSDVFRAQGDDMSS). Positions 566 to 581 (QNYDDDFEEDEAEEDS) are enriched in acidic residues.

It belongs to the peptidase M14 family. It depends on Zn(2+) as a cofactor.

It is found in the vacuole. Its subcellular location is the secreted. Inactive carboxypeptidase that may play a role in cell wall organization and biogenesis. The chain is Inactive metallocarboxypeptidase ECM14 (ECM14) from Arthroderma gypseum (strain ATCC MYA-4604 / CBS 118893) (Microsporum gypseum).